The primary structure comprises 149 residues: 3-dehydroquinate dehydratase (149 aa).

Residue Tyr-26 is the Proton acceptor of the active site. Residues Asn-77, His-83, and Asp-90 each coordinate substrate. His-103 functions as the Proton donor in the catalytic mechanism. Substrate-binding positions include 104–105 and Arg-114; that span reads LS.

This sequence belongs to the type-II 3-dehydroquinase family. Homododecamer.

The catalysed reaction is 3-dehydroquinate = 3-dehydroshikimate + H2O. It participates in metabolic intermediate biosynthesis; chorismate biosynthesis; chorismate from D-erythrose 4-phosphate and phosphoenolpyruvate: step 3/7. Functionally, catalyzes a trans-dehydration via an enolate intermediate. The polypeptide is 3-dehydroquinate dehydratase (Aliivibrio fischeri (strain MJ11) (Vibrio fischeri)).